The following is a 452-amino-acid chain: Phosphoglucosamine mutase (452 aa).

The active-site Phosphoserine intermediate is serine 88. Mg(2+)-binding residues include serine 88, aspartate 234, aspartate 236, and aspartate 238. The residue at position 88 (serine 88) is a Phosphoserine.

Belongs to the phosphohexose mutase family. Mg(2+) serves as cofactor. In terms of processing, activated by phosphorylation.

It catalyses the reaction alpha-D-glucosamine 1-phosphate = D-glucosamine 6-phosphate. Its function is as follows. Catalyzes the conversion of glucosamine-6-phosphate to glucosamine-1-phosphate. This chain is Phosphoglucosamine mutase, found in Methanococcus aeolicus (strain ATCC BAA-1280 / DSM 17508 / OCM 812 / Nankai-3).